Reading from the N-terminus, the 279-residue chain is Presqualene diphosphate synthase (279 aa).

It belongs to the phytoene/squalene synthase family. HpnD subfamily.

It catalyses the reaction 2 (2E,6E)-farnesyl diphosphate = presqualene diphosphate + diphosphate. It participates in secondary metabolite biosynthesis; hopanoid biosynthesis. In terms of biological role, involved in the biosynthesis of the hopanoid precursor squalene (SQ) from farnesyl diphosphate (FPP). Catalyzes the first step, the formation of presqualene diphosphate (PSPP) from two molecules of FPP. The protein is Presqualene diphosphate synthase of Rhodopseudomonas palustris (strain ATCC BAA-98 / CGA009).